Reading from the N-terminus, the 196-residue chain is Probable thymidylate kinase (196 aa).

8 to 15 lines the ATP pocket; that stretch reads GIDASGKT.

This sequence belongs to the thymidylate kinase family.

It carries out the reaction dTMP + ATP = dTDP + ADP. The sequence is that of Probable thymidylate kinase from Metallosphaera sedula (strain ATCC 51363 / DSM 5348 / JCM 9185 / NBRC 15509 / TH2).